We begin with the raw amino-acid sequence, 101 residues long: Small ubiquitin-related modifier 1 (101 aa).

Residues 20-97 (EYIKLKVIGQ…IEVYQEQTGG (78 aa)) enclose the Ubiquitin-like domain. Residue glycine 97 forms a Glycyl lysine isopeptide (Gly-Lys) (interchain with K-? in acceptor proteins) linkage. A propeptide spanning residues 98 to 101 (HSTV) is cleaved from the precursor.

It belongs to the ubiquitin family. SUMO subfamily. As to quaternary structure, interacts with SAE2, UBE2I, RANBP2, PIAS1 and PIAS2. Covalently attached to a number of proteins. Post-translationally, cleavage of precursor form by a sentrin-specific protease is necessary for function.

The protein resides in the nucleus membrane. It is found in the nucleus speckle. Its subcellular location is the cytoplasm. It localises to the nucleus. The protein localises to the PML body. The protein resides in the cell membrane. Functionally, ubiquitin-like protein that can be covalently attached to proteins as a monomer or a lysine-linked polymer. Covalent attachment via an isopeptide bond to its substrates requires prior activation by the E1 complex SAE1-SAE2 and linkage to the E2 enzyme UBE2I. This post-translational modification on lysine residues of proteins plays a crucial role in a number of cellular processes such as nuclear transport, DNA replication and repair, mitosis and signal transduction. Polymeric SUMO1 chains are also susceptible to polyubiquitination which functions as a signal for proteasomal degradation of modified proteins. This is Small ubiquitin-related modifier 1 (SUMO1) from Gallus gallus (Chicken).